Reading from the N-terminus, the 160-residue chain is Phosphopantetheine adenylyltransferase (160 aa).

Ser-9 is a substrate binding site. ATP contacts are provided by residues 9–10 (SL) and His-17. 3 residues coordinate substrate: Lys-41, Leu-74, and Lys-88. Residues 89–91 (GIR), Glu-99, and 123–129 (YLHLSST) contribute to the ATP site.

This sequence belongs to the bacterial CoaD family. In terms of assembly, homohexamer. Mg(2+) serves as cofactor.

The protein resides in the cytoplasm. The catalysed reaction is (R)-4'-phosphopantetheine + ATP + H(+) = 3'-dephospho-CoA + diphosphate. It functions in the pathway cofactor biosynthesis; coenzyme A biosynthesis; CoA from (R)-pantothenate: step 4/5. In terms of biological role, reversibly transfers an adenylyl group from ATP to 4'-phosphopantetheine, yielding dephospho-CoA (dPCoA) and pyrophosphate. The protein is Phosphopantetheine adenylyltransferase of Renibacterium salmoninarum (strain ATCC 33209 / DSM 20767 / JCM 11484 / NBRC 15589 / NCIMB 2235).